A 345-amino-acid chain; its full sequence is tRNA N6-adenosine threonylcarbamoyltransferase (345 aa).

2 residues coordinate Fe cation: His-111 and His-115. Substrate contacts are provided by residues 134–138 (LVSGG), Asp-167, Gly-180, and Asn-277. A Fe cation-binding site is contributed by Asp-305.

Belongs to the KAE1 / TsaD family. The cofactor is Fe(2+).

The protein resides in the cytoplasm. The enzyme catalyses L-threonylcarbamoyladenylate + adenosine(37) in tRNA = N(6)-L-threonylcarbamoyladenosine(37) in tRNA + AMP + H(+). Required for the formation of a threonylcarbamoyl group on adenosine at position 37 (t(6)A37) in tRNAs that read codons beginning with adenine. Is involved in the transfer of the threonylcarbamoyl moiety of threonylcarbamoyl-AMP (TC-AMP) to the N6 group of A37, together with TsaE and TsaB. TsaD likely plays a direct catalytic role in this reaction. This is tRNA N6-adenosine threonylcarbamoyltransferase from Laribacter hongkongensis (strain HLHK9).